A 154-amino-acid chain; its full sequence is MRCSVTKFFCSTAKKSQMVERVKDYMYKNDKLFELLDARILEMKEGYAKVEMVVKKEHLNAANVCHGGIIFSLADLAFALASNSHGKLALAIEVSITYMKAAYEGEKLVAEAKEVNLGNKTATYLMEVKNSANKLIALAKGTVYRVNEDFPPTS.

This sequence belongs to the thioesterase PaaI family.

The protein is Putative esterase AF_2264 of Archaeoglobus fulgidus (strain ATCC 49558 / DSM 4304 / JCM 9628 / NBRC 100126 / VC-16).